Consider the following 118-residue polypeptide: Large ribosomal subunit protein bL20 (118 aa).

It belongs to the bacterial ribosomal protein bL20 family.

Binds directly to 23S ribosomal RNA and is necessary for the in vitro assembly process of the 50S ribosomal subunit. It is not involved in the protein synthesizing functions of that subunit. The protein is Large ribosomal subunit protein bL20 of Shigella dysenteriae serotype 1 (strain Sd197).